A 97-amino-acid chain; its full sequence is DNA-binding protein NEQ150 (97 aa).

This sequence belongs to the PDCD5 family.

This Nanoarchaeum equitans (strain Kin4-M) protein is DNA-binding protein NEQ150.